The chain runs to 92 residues: Transcription factor PRE4 (92 aa).

In terms of domain architecture, bHLH spans 5–60 (KSRSRQTGASMITDEQINDLVLQLHRLLPELANNRRSGKVSASRVLQETCSYIRNL).

Belongs to the bHLH protein family. Interacts with HFR1 and IBH1. As to expression, expressed in roots, leaves, stems and flowers.

Its subcellular location is the nucleus. Functionally, atypical and probable non DNA-binding bHLH transcription factor that integrates multiple signaling pathways to regulate cell elongation and plant development. Regulates light responses by binding and inhibiting the activity of the bHLH transcription factor HFR1, a critical regulator of light signaling and shade avoidance. May have a regulatory role in various aspects of gibberellin-dependent growth and development. In Arabidopsis thaliana (Mouse-ear cress), this protein is Transcription factor PRE4 (PRE4).